The chain runs to 234 residues: Zinc finger FYVE domain-containing protein 21 (234 aa).

The segment at 44–104 (DKECPRCMQC…QCADCALVSH (61 aa)) adopts an FYVE-type zinc-finger fold. Residues cysteine 50, cysteine 53, cysteine 66, cysteine 69, cysteine 74, cysteine 77, cysteine 96, and cysteine 99 each coordinate Zn(2+). The PH-like stretch occupies residues 107–234 (AEFYDKQLKV…TKLLYESRDQ (128 aa)).

In terms of assembly, interacts with PTK2/FAK1. As to expression, widely expressed.

It localises to the cell junction. The protein resides in the focal adhesion. It is found in the cytoplasmic vesicle. The protein localises to the endosome. Its function is as follows. Plays a role in cell adhesion, and thereby in cell motility which requires repeated formation and disassembly of focal adhesions. Regulates microtubule-induced PTK2/FAK1 dephosphorylation, an event important for focal adhesion disassembly, as well as integrin beta-1/ITGB1 cell surface expression. In Mus musculus (Mouse), this protein is Zinc finger FYVE domain-containing protein 21 (Zfyve21).